Consider the following 498-residue polypeptide: GTPase Der (498 aa).

2 consecutive EngA-type G domains span residues 3 to 166 (PVVA…FEEL) and 212 to 385 (IKFA…RSAT). GTP contacts are provided by residues 9–16 (GRPNVGKS), 56–60 (DTGGI), 118–121 (NKTD), 218–225 (GRPNVGKS), 265–269 (DTAGV), and 330–333 (NKWD). The region spanning 386–470 (KRISTSMLTR…PIHIEFQEGD (85 aa)) is the KH-like domain.

Belongs to the TRAFAC class TrmE-Era-EngA-EngB-Septin-like GTPase superfamily. EngA (Der) GTPase family. As to quaternary structure, associates with the 50S ribosomal subunit.

Its function is as follows. GTPase that plays an essential role in the late steps of ribosome biogenesis. This Tolumonas auensis (strain DSM 9187 / NBRC 110442 / TA 4) protein is GTPase Der.